The following is a 179-amino-acid chain: Probable WRKY transcription factor 24 (179 aa).

Positions 92-157 (SDDDVLDDGY…YEGVHNHPCE (66 aa)) form a DNA-binding region, WRKY.

This sequence belongs to the WRKY group II-c family.

It is found in the nucleus. Its function is as follows. Transcription factor. Interacts specifically with the W box (5'-(T)TGAC[CT]-3'), a frequently occurring elicitor-responsive cis-acting element. The sequence is that of Probable WRKY transcription factor 24 (WRKY24) from Arabidopsis thaliana (Mouse-ear cress).